Reading from the N-terminus, the 120-residue chain is Photosystem II extrinsic protein U (120 aa).

The N-terminal stretch at 1 to 29 is a signal peptide; that stretch reads MKRLLSLLTGVLVMTGLLMALIFPQSAYA.

The protein belongs to the PsbU family. PSII is composed of 1 copy each of membrane proteins PsbA, PsbB, PsbC, PsbD, PsbE, PsbF, PsbH, PsbI, PsbJ, PsbK, PsbL, PsbM, PsbT, PsbX, PsbY, Psb30/Ycf12, peripheral proteins PsbO, CyanoQ (PsbQ), PsbU, PsbV and a large number of cofactors. It forms dimeric complexes.

It localises to the cellular thylakoid membrane. One of the extrinsic, lumenal subunits of photosystem II (PSII). PSII is a light-driven water plastoquinone oxidoreductase, using light energy to abstract electrons from H(2)O, generating a proton gradient subsequently used for ATP formation. The extrinsic proteins stabilize the structure of photosystem II oxygen-evolving complex (OEC), the ion environment of oxygen evolution and protect the OEC against heat-induced inactivation. The polypeptide is Photosystem II extrinsic protein U (Prochlorococcus marinus (strain MIT 9303)).